A 315-amino-acid polypeptide reads, in one-letter code: uncharacterized protein (315 aa).

At 1-38 the chain is on the cytoplasmic side; that stretch reads MDVLLSLPQPELFKTTVIPFLANRNIIKSEAILSNLHS. A helical transmembrane segment spans residues 39-59; that stretch reads IFYVAIFYHIWFLFGKWILFP. Over 60–101 the chain is Lumenal; it reads HLVKWKLDYDQKHNVKKDEKTTSERQAQHYKKKYTSLINQSS. The TLC domain occupies 95-302; sequence SLINQSSVHL…MVSVAAKVLK (208 aa). The chain crosses the membrane as a helical span at residues 102–122; it reads VHLISLLQSIVVLYYSLKFLL. Over 123–144 the chain is Cytoplasmic; it reads DPKASAEPYQTSHSRVFTENRD. A helical membrane pass occupies residues 145-165; it reads TQVICIFAIGYFVWDIYISTM. Over 166-170 the chain is Lumenal; that stretch reads YSTFP. Residues 171-190 traverse the membrane as a helical segment; it reads FVVHGIISTVVFCIGLKPYI. Residues 191–225 are Cytoplasmic-facing; that stretch reads QYYAPVFLMFELSNPSLNFRWFGIKFLPQKSKFCS. A helical transmembrane segment spans residues 226–246; that stretch reads LLLLLNNLTLMVVFFAARIAW. Residues 247-264 are Lumenal-facing; the sequence is GWFQIGKLCYDFYQVRNE. The helical transmembrane segment at 265 to 285 threads the bilayer; that stretch reads PGFLVFDTIVILAGNFVLDIL. The Cytoplasmic segment spans residues 286-315; it reads NVIWFSTMVSVAAKVLKKGESVDKVTKNEQ.

It localises to the endoplasmic reticulum membrane. This is an uncharacterized protein from Saccharomyces cerevisiae (strain ATCC 204508 / S288c) (Baker's yeast).